Reading from the N-terminus, the 968-residue chain is RNA polymerase-associated protein RapA (968 aa).

The 170-residue stretch at 163 to 332 folds into the Helicase ATP-binding domain; the sequence is EVGRRYAPRV…FARLRLLDPD (170 aa). Position 176-183 (176-183) interacts with ATP; sequence DEVGLGKT. Positions 278-281 match the DEAH box motif; it reads DEAH. One can recognise a Helicase C-terminal domain in the interval 491–655; the sequence is RVDWLIEFLK…EFAEDLLNVL (165 aa).

This sequence belongs to the SNF2/RAD54 helicase family. RapA subfamily. In terms of assembly, interacts with the RNAP. Has a higher affinity for the core RNAP than for the holoenzyme. Its ATPase activity is stimulated by binding to RNAP.

Transcription regulator that activates transcription by stimulating RNA polymerase (RNAP) recycling in case of stress conditions such as supercoiled DNA or high salt concentrations. Probably acts by releasing the RNAP, when it is trapped or immobilized on tightly supercoiled DNA. Does not activate transcription on linear DNA. Probably not involved in DNA repair. The chain is RNA polymerase-associated protein RapA from Shewanella sp. (strain ANA-3).